We begin with the raw amino-acid sequence, 438 residues long: Methylenetetrahydrofolate--tRNA-(uracil-5-)-methyltransferase TrmFO 2 (438 aa).

9-14 lines the FAD pocket; it reads GAGLAG.

The protein belongs to the MnmG family. TrmFO subfamily. The cofactor is FAD.

The protein localises to the cytoplasm. It carries out the reaction uridine(54) in tRNA + (6R)-5,10-methylene-5,6,7,8-tetrahydrofolate + NADH + H(+) = 5-methyluridine(54) in tRNA + (6S)-5,6,7,8-tetrahydrofolate + NAD(+). It catalyses the reaction uridine(54) in tRNA + (6R)-5,10-methylene-5,6,7,8-tetrahydrofolate + NADPH + H(+) = 5-methyluridine(54) in tRNA + (6S)-5,6,7,8-tetrahydrofolate + NADP(+). In terms of biological role, catalyzes the folate-dependent formation of 5-methyl-uridine at position 54 (M-5-U54) in all tRNAs. This chain is Methylenetetrahydrofolate--tRNA-(uracil-5-)-methyltransferase TrmFO 2, found in Mycoplasma mycoides subsp. mycoides SC (strain CCUG 32753 / NCTC 10114 / PG1).